The sequence spans 389 residues: MQQHSSKTAYVYSDKLLQYRFHDQHPFNQMRLKLTTELLLNANLLSPEQIVQPRIATDDELMLIHKYDYVEAIKHASHGIISEDEAKKYGLNDEENSQFKHMHRHSATIVGGALTLADLIMSGKVLNGCHLGGGLHHAQPGRASGFCIYNDIAITAQYLAKEYNQRVLIIDTDAHHGDGTQWSFYADNHVTTYSIHETGKFLFPGSGHYTERGEDIGYGHTVNVPLEPYTEDASFLECFKLTVEPVVKSFKPDIILSVNGVDIHYRDPLTHLNCTLHSLYEIPYFVKYLADSYTNGKVIMFGGGGYNIWRVVPRAWSHVFLSLIDQPIQSGYLPLEWINKWKHYSSELLPKRWEDRLNDYTYVPRTKEISEKNKKLALHIASWYESTRQ.

Belongs to the histone deacetylase family.

It participates in ketone degradation; acetoin degradation. Its function is as follows. Role in growth on acetoin or butanediol. Involved in the breakdown of these compounds used as a carbon source. The sequence is that of Acetoin utilization protein AcuC (acuC) from Staphylococcus aureus (strain MSSA476).